Reading from the N-terminus, the 304-residue chain is Cell surface-binding protein OPG105 (304 aa).

One can recognise an Alpha-carbonic anhydrase domain in the interval 1 to 235; it reads MPQQLSPINI…NDDTQVYYSG (235 aa). The Virion surface segment spans residues 1–275; the sequence is MPQQLSPINI…YQKYIEENKT (275 aa). Residues 276–294 traverse the membrane as a helical segment; the sequence is FAIIAIVFVFILTAILFFM. The Intravirion segment spans residues 295–304; it reads SRRYSREKQN.

The protein belongs to the alpha-carbonic anhydrase family. As to quaternary structure, homodimer; disulfide-linked. Apparently non-glycosylated.

The protein localises to the virion membrane. Functionally, binds to chondroitin sulfate on the cell surface to provide virion attachment to target cell. The polypeptide is Cell surface-binding protein OPG105 (OPG105) (Homo sapiens (Human)).